Reading from the N-terminus, the 83-residue chain is Small ribosomal subunit protein uS17 (83 aa).

This sequence belongs to the universal ribosomal protein uS17 family. As to quaternary structure, part of the 30S ribosomal subunit.

One of the primary rRNA binding proteins, it binds specifically to the 5'-end of 16S ribosomal RNA. The protein is Small ribosomal subunit protein uS17 of Acaryochloris marina (strain MBIC 11017).